A 339-amino-acid polypeptide reads, in one-letter code: Ketol-acid reductoisomerase (NADP(+)) (339 aa).

Residues 1–182 (MRVYYDRDAD…GGGRSGIIET (182 aa)) form the KARI N-terminal Rossmann domain. NADP(+)-binding positions include 24–27 (YGSQ), Lys-48, Ser-51, Thr-53, and 83–86 (DELQ). Residue His-108 is part of the active site. Gly-134 is a binding site for NADP(+). Residues 183–328 (NFREECETDL…AKLRAMMPWI (146 aa)) form the KARI C-terminal knotted domain. Mg(2+) is bound by residues Asp-191, Glu-195, Glu-227, and Glu-231. A substrate-binding site is contributed by Ser-252.

It belongs to the ketol-acid reductoisomerase family. Mg(2+) serves as cofactor.

The enzyme catalyses (2R)-2,3-dihydroxy-3-methylbutanoate + NADP(+) = (2S)-2-acetolactate + NADPH + H(+). It catalyses the reaction (2R,3R)-2,3-dihydroxy-3-methylpentanoate + NADP(+) = (S)-2-ethyl-2-hydroxy-3-oxobutanoate + NADPH + H(+). The protein operates within amino-acid biosynthesis; L-isoleucine biosynthesis; L-isoleucine from 2-oxobutanoate: step 2/4. It functions in the pathway amino-acid biosynthesis; L-valine biosynthesis; L-valine from pyruvate: step 2/4. Involved in the biosynthesis of branched-chain amino acids (BCAA). Catalyzes an alkyl-migration followed by a ketol-acid reduction of (S)-2-acetolactate (S2AL) to yield (R)-2,3-dihydroxy-isovalerate. In the isomerase reaction, S2AL is rearranged via a Mg-dependent methyl migration to produce 3-hydroxy-3-methyl-2-ketobutyrate (HMKB). In the reductase reaction, this 2-ketoacid undergoes a metal-dependent reduction by NADPH to yield (R)-2,3-dihydroxy-isovalerate. This chain is Ketol-acid reductoisomerase (NADP(+)), found in Mesorhizobium japonicum (strain LMG 29417 / CECT 9101 / MAFF 303099) (Mesorhizobium loti (strain MAFF 303099)).